The primary structure comprises 382 residues: uncharacterized protein (382 aa).

12 helical membrane passes run 8 to 28, 41 to 61, 73 to 93, 94 to 114, 133 to 153, 157 to 177, 208 to 228, 235 to 255, 274 to 294, 295 to 315, 325 to 345, and 349 to 369; these read VLLLLCGLLLFTISIAVLNTL, WQVGMVSSSYFSGNLVGTLIA, SYHYSCILFALATCGLMLSVD, FWSWLGWRFFAGVACALIWVI, AAYMMVYYLGTVTGQLLLGVV, LLSVIPWVSALVITAMLPLLF, GCIISGVLLGSLYGLLPLYLS, ASVGWWMALLVSSGIIGQWPI, VVILGSIAILGNYALAPALFI, LGCAGFTLYPVAMAWACEKVS, ALLMSYTIGSLTGPTMTSLLM, and SDNLLFIMIAGVALVYLMMLL.

It belongs to the major facilitator superfamily. YcaD (TC 2.A.1.26) family.

Its subcellular location is the cell inner membrane. This is an uncharacterized protein from Yersinia enterocolitica serotype O:8 / biotype 1B (strain NCTC 13174 / 8081).